A 672-amino-acid polypeptide reads, in one-letter code: DNA ligase (672 aa).

NAD(+)-binding positions include 34 to 38 (DAEYD), 83 to 84 (SL), and glutamate 117. Lysine 119 serves as the catalytic N6-AMP-lysine intermediate. Arginine 140, glutamate 177, lysine 293, and lysine 317 together coordinate NAD(+). Positions 411, 414, 429, and 434 each coordinate Zn(2+). Positions 591-672 (RVGGRFTGKT…FLAMLGVCRT (82 aa)) constitute a BRCT domain.

The protein belongs to the NAD-dependent DNA ligase family. LigA subfamily. Mg(2+) is required as a cofactor. Requires Mn(2+) as cofactor.

The enzyme catalyses NAD(+) + (deoxyribonucleotide)n-3'-hydroxyl + 5'-phospho-(deoxyribonucleotide)m = (deoxyribonucleotide)n+m + AMP + beta-nicotinamide D-nucleotide.. Functionally, DNA ligase that catalyzes the formation of phosphodiester linkages between 5'-phosphoryl and 3'-hydroxyl groups in double-stranded DNA using NAD as a coenzyme and as the energy source for the reaction. It is essential for DNA replication and repair of damaged DNA. This is DNA ligase from Geotalea uraniireducens (strain Rf4) (Geobacter uraniireducens).